The following is a 300-amino-acid chain: DNA packaging protein OPG160 (300 aa).

It belongs to the orthopoxvirus OPG160 protein family. Interacts with protein OPG137.

Participates in viral DNA packaging and virion morphogenesis. The chain is DNA packaging protein OPG160 (OPG160) from Monkeypox virus.